A 203-amino-acid polypeptide reads, in one-letter code: Guanylate kinase (203 aa).

The 179-residue stretch at Gly-3–Thr-181 folds into the Guanylate kinase-like domain. An ATP-binding site is contributed by Ala-10–Ser-17.

It belongs to the guanylate kinase family.

The protein resides in the cytoplasm. It carries out the reaction GMP + ATP = GDP + ADP. Its function is as follows. Essential for recycling GMP and indirectly, cGMP. The sequence is that of Guanylate kinase from Xanthomonas oryzae pv. oryzae (strain MAFF 311018).